Reading from the N-terminus, the 927-residue chain is Isoleucine--tRNA ligase (927 aa).

The 'HIGH' region signature appears at 60–70 (PYANGNIHLGH). L-isoleucyl-5'-AMP is bound at residue Glu557. The 'KMSKS' region motif lies at 598 to 602 (KMSKS). Residue Lys601 participates in ATP binding. Zn(2+) contacts are provided by Cys895, Cys898, Cys915, and Cys918.

This sequence belongs to the class-I aminoacyl-tRNA synthetase family. IleS type 1 subfamily. As to quaternary structure, monomer. Zn(2+) is required as a cofactor.

Its subcellular location is the cytoplasm. The catalysed reaction is tRNA(Ile) + L-isoleucine + ATP = L-isoleucyl-tRNA(Ile) + AMP + diphosphate. In terms of biological role, catalyzes the attachment of isoleucine to tRNA(Ile). As IleRS can inadvertently accommodate and process structurally similar amino acids such as valine, to avoid such errors it has two additional distinct tRNA(Ile)-dependent editing activities. One activity is designated as 'pretransfer' editing and involves the hydrolysis of activated Val-AMP. The other activity is designated 'posttransfer' editing and involves deacylation of mischarged Val-tRNA(Ile). The polypeptide is Isoleucine--tRNA ligase (Syntrophomonas wolfei subsp. wolfei (strain DSM 2245B / Goettingen)).